The primary structure comprises 236 residues: Urease accessory protein UreG (236 aa).

Residues 1 to 26 (MHDHSLHSGHDHGLGPGSFHDRGAPH) form a disordered region. 42–49 (GPVGSGKT) provides a ligand contact to GTP.

This sequence belongs to the SIMIBI class G3E GTPase family. UreG subfamily. Homodimer. UreD, UreF and UreG form a complex that acts as a GTP-hydrolysis-dependent molecular chaperone, activating the urease apoprotein by helping to assemble the nickel containing metallocenter of UreC. The UreE protein probably delivers the nickel.

The protein localises to the cytoplasm. Facilitates the functional incorporation of the urease nickel metallocenter. This process requires GTP hydrolysis, probably effectuated by UreG. This is Urease accessory protein UreG from Anaeromyxobacter sp. (strain Fw109-5).